We begin with the raw amino-acid sequence, 516 residues long: MAFTNVCLWTLLAFMLTWTVFYVTNRGKKATQLADAVVEEREDGATDVIIVGAGVGGSALAYALAKDGRRVHVIERDLREPERIMGEFMQPGGRLMLSKLGLEDCLEGIDAQKATGMTVYKDGKEAVASFPVDNNNFPFDPSARSFHNGRFVQRLRQKASSLPNVRLEEGTVKSLIEEKGVIKGVTYKNSAGEETTALAPLTVVCDGCYSNLRRSLNDNNAEVLSYQVGFISKNCQLEEPEKLKLIMSKPSFTMLYQISSTDVRCVFEVLPNNIPSISNGEMATFVKNTIAPQVPLKLRKIFLKGIDEGEHIKAMPTKKMTATLSEKKGVILLGDAFNMRHPAIASGMMVLLSDILILRRLLQPLSNLGNAQKISQVIKSFYDIRKPMSATVNTLGNAFSQVLVASTDEAKEAMRQGCYDYLSSGGFRTSGMMALLGGMNPRPISLIYHLCAITLSSIGHLLSPFPSPLRIWHSLRLFGLAMKMLVPHLKAEGVSQMLFPVNAAAYSKSYMAATAL.

The next 2 helical transmembrane spans lie at 3–23 and 45–65; these read FTNVCLWTLLAFMLTWTVFYV and ATDVIIVGAGVGGSALAYALA. FAD-binding positions include 55 to 56, 75 to 76, Arg83, Phe88, Arg156, Val172, Asp335, and Met348; these read VG and ER. Residues 446–466 traverse the membrane as a helical segment; it reads LIYHLCAITLSSIGHLLSPFP.

The protein belongs to the squalene monooxygenase family. FAD is required as a cofactor. Expressed in seedlings, leaves, stems and inflorescences. Detected in siliques.

The protein resides in the membrane. It catalyses the reaction squalene + reduced [NADPH--hemoprotein reductase] + O2 = (S)-2,3-epoxysqualene + oxidized [NADPH--hemoprotein reductase] + H2O + H(+). Its pathway is terpene metabolism; lanosterol biosynthesis; lanosterol from farnesyl diphosphate: step 2/3. Functionally, catalyzes the stereospecific oxidation of squalene to (S)-2,3-epoxysqualene, and is considered to be a rate-limiting enzyme in steroid biosynthesis. The polypeptide is Squalene epoxidase 5 (SQE5) (Arabidopsis thaliana (Mouse-ear cress)).